A 157-amino-acid polypeptide reads, in one-letter code: Probable succinate transporter subunit YjjB (157 aa).

Transmembrane regions (helical) follow at residues 6 to 26, 55 to 75, 87 to 107, and 129 to 149; these read FFMA…GFAM, AGFN…SIGI, VFTV…TAMI, and FLKA…PGLW.

Belongs to the ThrE exporter (TC 2.A.79) family. In terms of assembly, the transporter is composed of YjjB and YjjP.

Its subcellular location is the cell inner membrane. In terms of biological role, involved in succinate export with YjjP. Both proteins are required for export. The protein is Probable succinate transporter subunit YjjB of Salmonella arizonae (strain ATCC BAA-731 / CDC346-86 / RSK2980).